Reading from the N-terminus, the 460-residue chain is Phosphoglucomutase (460 aa).

S103 functions as the Phosphoserine intermediate in the catalytic mechanism. Position 103 (S103) interacts with Mg(2+). Residues 103–104 (SH) and K113 contribute to the substrate site. Positions 239, 241, and 243 each coordinate Mg(2+). Residues 243-244 (DR), T303, and 322-324 (EMS) contribute to the substrate site.

The protein belongs to the phosphohexose mutase family. Requires Mg(2+) as cofactor.

It is found in the cytoplasm. It carries out the reaction alpha-D-glucose 1-phosphate = alpha-D-glucose 6-phosphate. In terms of biological role, this enzyme participates in both the breakdown and synthesis of glucose. This chain is Phosphoglucomutase (pgm), found in Neisseria gonorrhoeae.